The chain runs to 40 residues: Large ribosomal subunit protein bL36A (40 aa).

Belongs to the bacterial ribosomal protein bL36 family.

The sequence is that of Large ribosomal subunit protein bL36A from Renibacterium salmoninarum (strain ATCC 33209 / DSM 20767 / JCM 11484 / NBRC 15589 / NCIMB 2235).